A 185-amino-acid polypeptide reads, in one-letter code: Translocon-associated protein subunit gamma (185 aa).

Methionine 1 carries the N-acetylmethionine modification. Residues 1–27 lie on the Lumenal side of the membrane; it reads MAPKGSSKQQSEEDLLLQDFSRNLSAK. Residues serine 7 and serine 11 each carry the phosphoserine modification. A helical transmembrane segment spans residues 28 to 48; the sequence is SSALFFGNAFIVSAIPIWLYW. The Cytoplasmic portion of the chain corresponds to 49-54; it reads RIWHMD. Residues 55-76 form a helical membrane-spanning segment; it reads LIQSAVLYSVMTLVSTYLVAFA. Over 77–135 the chain is Lumenal; the sequence is YKNVKFVLKHKVAQKREDAVSKEVTRKLSEADNRKMSRKEKDERILWKKNEVADYEATT. At serine 105 the chain carries Phosphoserine. Residues 136–157 traverse the membrane as a helical segment; sequence FSIFYNNTLFLVVVIVASFFIL. The Cytoplasmic portion of the chain corresponds to 158–163; the sequence is KNFNPT. A helical transmembrane segment spans residues 164–184; it reads VNYILSISASSGLIALLSTGS.

This sequence belongs to the TRAP-gamma family. In terms of assembly, heterotetramer of TRAP-alpha, TRAP-beta, TRAP-delta and TRAP-gamma.

It localises to the endoplasmic reticulum membrane. Functionally, TRAP proteins are part of a complex whose function is to bind calcium to the ER membrane and thereby regulate the retention of ER resident proteins. The protein is Translocon-associated protein subunit gamma (SSR3) of Homo sapiens (Human).